We begin with the raw amino-acid sequence, 771 residues long: Protein lin-54 homolog (771 aa).

Disordered regions lie at residues 21-44 (AMDEDPPASHLTPPPQSAPESAQV) and 68-105 (TNAKSTTSSTTQLLLTPSSSSSTTTKNATPTLPKIPSL). Positions 72–92 (STTSSTTQLLLTPSSSSSTTT) are enriched in low complexity. Phosphoserine is present on residues Ser288, Ser292, and Ser308. In terms of domain architecture, CRC spans 544–657 (PRKPCNCTRS…KCMGCKNFEE (114 aa)). Residues 546 to 559 (KPCNCTRSQCLKLY) form a DNA-binding region. Zn(2+) contacts are provided by Cys548, Cys550, Cys555, Cys560, Cys562, Cys569, Cys572, Cys574, and Cys577. Positions 606–619 (IGKGKEGESDRRHS) are linker. Residues Cys622, Cys624, Cys629, Cys634, Cys636, Cys643, Cys647, Cys649, and Cys652 each contribute to the Zn(2+) site. The tract at residues 622 to 635 (CNCKKSGCLKNYCE) is DNA-binding.

This sequence belongs to the lin-54 family. In terms of assembly, component of the DREAM complex.

It is found in the nucleus. Functionally, component of the DREAM complex, a multiprotein complex that can both act as a transcription activator or repressor depending on the context. Specifically recognizes the consensus motif 5'-TTYRAA-3' in target DNA. This is Protein lin-54 homolog (lin54) from Danio rerio (Zebrafish).